The sequence spans 338 residues: MKVYYDKDADLSIIRDKKVAIIGYGSQGHAHAQNLKESGVDVIVGLRKDGASWKKAEAAGHTVKEVGEAVKTADVVMILLPDETQPDVYRNDIAPNLKKGAALAFAHGFNIHYNQIVPPADIDVIMIAPKGPGHTVRSEFLKGGGVPSLIAVYQDHSGRARDVALSYAAANGGTKGGVIETSFREETETDLFGEQAVLCGGAVELVKAGFETLTEAGYAPEMAYFECLHELKLIVDLMYEGGIANMNYSISNNAEYGEYVTGPEVITAASKEAMKKALYRIQSGEYAKMFILEGKTNYPSMTARRRLTADHPIEKVGAELRAMMPWIAKNKLVDQSKN.

Residues 1 to 181 (MKVYYDKDAD…GGTKGGVIET (181 aa)) enclose the KARI N-terminal Rossmann domain. Residues 24–27 (YGSQ), arginine 47, serine 52, and 82–85 (DETQ) contribute to the NADP(+) site. Histidine 107 is an active-site residue. Glycine 133 contributes to the NADP(+) binding site. The region spanning 182 to 327 (SFREETETDL…AELRAMMPWI (146 aa)) is the KARI C-terminal knotted domain. 4 residues coordinate Mg(2+): aspartate 190, glutamate 194, glutamate 226, and glutamate 230. Serine 251 is a substrate binding site.

This sequence belongs to the ketol-acid reductoisomerase family. The cofactor is Mg(2+).

The catalysed reaction is (2R)-2,3-dihydroxy-3-methylbutanoate + NADP(+) = (2S)-2-acetolactate + NADPH + H(+). The enzyme catalyses (2R,3R)-2,3-dihydroxy-3-methylpentanoate + NADP(+) = (S)-2-ethyl-2-hydroxy-3-oxobutanoate + NADPH + H(+). Its pathway is amino-acid biosynthesis; L-isoleucine biosynthesis; L-isoleucine from 2-oxobutanoate: step 2/4. It functions in the pathway amino-acid biosynthesis; L-valine biosynthesis; L-valine from pyruvate: step 2/4. Functionally, involved in the biosynthesis of branched-chain amino acids (BCAA). Catalyzes an alkyl-migration followed by a ketol-acid reduction of (S)-2-acetolactate (S2AL) to yield (R)-2,3-dihydroxy-isovalerate. In the isomerase reaction, S2AL is rearranged via a Mg-dependent methyl migration to produce 3-hydroxy-3-methyl-2-ketobutyrate (HMKB). In the reductase reaction, this 2-ketoacid undergoes a metal-dependent reduction by NADPH to yield (R)-2,3-dihydroxy-isovalerate. The protein is Ketol-acid reductoisomerase (NADP(+)) of Laribacter hongkongensis (strain HLHK9).